A 572-amino-acid polypeptide reads, in one-letter code: Proline--tRNA ligase (572 aa).

This sequence belongs to the class-II aminoacyl-tRNA synthetase family. ProS type 1 subfamily. In terms of assembly, homodimer.

The protein resides in the cytoplasm. The enzyme catalyses tRNA(Pro) + L-proline + ATP = L-prolyl-tRNA(Pro) + AMP + diphosphate. In terms of biological role, catalyzes the attachment of proline to tRNA(Pro) in a two-step reaction: proline is first activated by ATP to form Pro-AMP and then transferred to the acceptor end of tRNA(Pro). As ProRS can inadvertently accommodate and process non-cognate amino acids such as alanine and cysteine, to avoid such errors it has two additional distinct editing activities against alanine. One activity is designated as 'pretransfer' editing and involves the tRNA(Pro)-independent hydrolysis of activated Ala-AMP. The other activity is designated 'posttransfer' editing and involves deacylation of mischarged Ala-tRNA(Pro). The misacylated Cys-tRNA(Pro) is not edited by ProRS. The sequence is that of Proline--tRNA ligase from Klebsiella pneumoniae subsp. pneumoniae (strain ATCC 700721 / MGH 78578).